The sequence spans 145 residues: Lipoprotein signal peptidase (145 aa).

Transmembrane regions (helical) follow at residues 57–77 (LFFI…MIKL) and 79–99 (ENSL…GNLI). Residues Asp-109 and Asp-124 contribute to the active site. A helical transmembrane segment spans residues 120-140 (FNVADSFIVVGAIILGYLMIF).

Belongs to the peptidase A8 family.

The protein resides in the cell membrane. It carries out the reaction Release of signal peptides from bacterial membrane prolipoproteins. Hydrolyzes -Xaa-Yaa-Zaa-|-(S,diacylglyceryl)Cys-, in which Xaa is hydrophobic (preferably Leu), and Yaa (Ala or Ser) and Zaa (Gly or Ala) have small, neutral side chains.. The protein operates within protein modification; lipoprotein biosynthesis (signal peptide cleavage). In terms of biological role, this protein specifically catalyzes the removal of signal peptides from prolipoproteins. This is Lipoprotein signal peptidase from Caldanaerobacter subterraneus subsp. tengcongensis (strain DSM 15242 / JCM 11007 / NBRC 100824 / MB4) (Thermoanaerobacter tengcongensis).